An 84-amino-acid chain; its full sequence is Large ribosomal subunit protein bL27 (84 aa).

The interval 1-21 is disordered; that stretch reads MAHKKGGGSTKNGRDSNPKYL.

The protein belongs to the bacterial ribosomal protein bL27 family.

This Chlorobaculum parvum (strain DSM 263 / NCIMB 8327) (Chlorobium vibrioforme subsp. thiosulfatophilum) protein is Large ribosomal subunit protein bL27.